The following is a 378-amino-acid chain: Actin-related protein 2/3 complex subunit 1A (378 aa).

WD repeat units lie at residues R8–R47, K53–T92, R97–K138, R143–K182, L203–Q242, I257–S295, and V331–G375.

This sequence belongs to the WD repeat ARPC1 family. Component of the Arp2/3 complex composed of ARP2, ARP3, ARPC1/p41-ARC, ARPC2/p34-ARC, ARPC3/p21-ARC, ARPC4/p20-ARC and ARPC5/p16-ARC. As to expression, expressed at low levels in all tissues with a relatively highest expression in inflorescences.

The protein resides in the cytoplasm. It is found in the cytoskeleton. In terms of biological role, functions as a component of the Arp2/3 complex which is involved in regulation of actin polymerization and together with an activating nucleation-promoting factor (NPF) mediates the formation of branched actin networks. Arp2/3 complex plays a critical role in the control of cell morphogenesis via the modulation of cell polarity development. The protein is Actin-related protein 2/3 complex subunit 1A (ARPC1A) of Arabidopsis thaliana (Mouse-ear cress).